A 257-amino-acid polypeptide reads, in one-letter code: Dihydroorotate dehydrogenase B (NAD(+)), electron transfer subunit (257 aa).

The 101-residue stretch at 2–102 folds into the FAD-binding FR-type domain; that stretch reads MKQEQMTVVR…LGPLGNGFPL (101 aa). FAD contacts are provided by residues 53 to 56, 70 to 72, and 77 to 78; these read RPLS, IYR, and GT. [2Fe-2S] cluster contacts are provided by Cys-221, Cys-226, Cys-229, and Cys-244.

Belongs to the PyrK family. In terms of assembly, heterotetramer of 2 PyrK and 2 PyrD type B subunits. [2Fe-2S] cluster is required as a cofactor. The cofactor is FAD.

The protein operates within pyrimidine metabolism; UMP biosynthesis via de novo pathway; orotate from (S)-dihydroorotate (NAD(+) route): step 1/1. Responsible for channeling the electrons from the oxidation of dihydroorotate from the FMN redox center in the PyrD type B subunit to the ultimate electron acceptor NAD(+). The protein is Dihydroorotate dehydrogenase B (NAD(+)), electron transfer subunit of Geobacillus sp. (strain WCH70).